Consider the following 1085-residue polypeptide: Protein CROWDED NUCLEI 3 (1085 aa).

Coiled-coil stretches lie at residues aspartate 51–lysine 149 and arginine 185–leucine 695. A Glycyl lysine isopeptide (Lys-Gly) (interchain with G-Cter in ubiquitin) cross-link involves residue lysine 318. Positions alanine 404–glutamate 411 match the Nuclear localization signal motif. Lysine 661 is covalently cross-linked (Glycyl lysine isopeptide (Lys-Gly) (interchain with G-Cter in ubiquitin)). Phosphoserine is present on residues serine 764, serine 787, serine 825, and serine 843. Disordered regions lie at residues threonine 801 to glutamate 997 and asparagine 1020 to lysine 1077. Residues serine 813–serine 825 are compositionally biased toward basic and acidic residues. Positions arginine 854–arginine 868 are enriched in basic residues. Residues valine 877–threonine 897 are compositionally biased toward basic and acidic residues. Serine 910 carries the phosphoserine modification. Residues valine 932 to tyrosine 941 are compositionally biased toward polar residues. A compositionally biased stretch (basic and acidic residues) spans valine 949–lysine 995. The span at glutamate 1045 to threonine 1066 shows a compositional bias: acidic residues.

Belongs to the CRWN family. As to quaternary structure, core component of the LINC complex which is composed of inner nuclear membrane SUN domain-containing proteins coupled to outer nuclear membrane WIP proteins, the nucleoskeletal CRWN/LINC proteins, and, possibly, KAKU4. As to expression, expressed at low levels in roots, leaves, flowers and flower stalks.

It is found in the nucleus membrane. The protein localises to the nucleus. Its subcellular location is the nucleoplasm. The protein resides in the cytoplasm. It localises to the nucleus lamina. Its function is as follows. Component of SUN-protein-containing multivariate complexes also called LINC complexes which link the nucleoskeleton and cytoskeleton by providing versatile outer nuclear membrane attachment sites for cytoskeletal filaments. Required for nucleus structure organization (e.g. size and shape). This Arabidopsis thaliana (Mouse-ear cress) protein is Protein CROWDED NUCLEI 3.